The following is a 272-amino-acid chain: 2-succinyl-6-hydroxy-2,4-cyclohexadiene-1-carboxylate synthase (272 aa).

It belongs to the AB hydrolase superfamily. MenH family. Monomer.

It catalyses the reaction 5-enolpyruvoyl-6-hydroxy-2-succinyl-cyclohex-3-ene-1-carboxylate = (1R,6R)-6-hydroxy-2-succinyl-cyclohexa-2,4-diene-1-carboxylate + pyruvate. Its pathway is quinol/quinone metabolism; 1,4-dihydroxy-2-naphthoate biosynthesis; 1,4-dihydroxy-2-naphthoate from chorismate: step 3/7. It functions in the pathway quinol/quinone metabolism; menaquinone biosynthesis. In terms of biological role, catalyzes a proton abstraction reaction that results in 2,5-elimination of pyruvate from 2-succinyl-5-enolpyruvyl-6-hydroxy-3-cyclohexene-1-carboxylate (SEPHCHC) and the formation of 2-succinyl-6-hydroxy-2,4-cyclohexadiene-1-carboxylate (SHCHC). The sequence is that of 2-succinyl-6-hydroxy-2,4-cyclohexadiene-1-carboxylate synthase from Yersinia pseudotuberculosis serotype I (strain IP32953).